Reading from the N-terminus, the 482-residue chain is Variant surface glycoprotein ANTAT 1.1C (482 aa).

The first 8 residues, 1-8 (LHPQQALA), serve as a signal peptide directing secretion. Intrachain disulfides connect Cys24–Cys151 and Cys133–Cys188. Residue Asn92 is glycosylated (N-linked (GlcNAc...) asparagine). Residues Asn398 and Asn411 are each glycosylated (N-linked (GlcNAc...) asparagine). Asp459 is lipidated: GPI-anchor amidated aspartate. The propeptide at 460 to 482 (SSILVTKKFALSLVSAAFASLLF) is removed in mature form.

The protein resides in the cell membrane. Functionally, VSG forms a coat on the surface of the parasite. The trypanosome evades the immune response of the host by expressing a series of antigenically distinct VSGs from an estimated 1000 VSG genes. In Trypanosoma brucei brucei, this protein is Variant surface glycoprotein ANTAT 1.1C.